A 609-amino-acid polypeptide reads, in one-letter code: UvrABC system protein C (609 aa).

The GIY-YIG domain maps to 16–94; the sequence is SSAGVYRMYD…IKQYMPKYNV (79 aa). Positions 203–238 constitute a UVR domain; it reads QQVISALVDKMELAAERQAYEQAARFRDQIMALRKV.

The protein belongs to the UvrC family. Interacts with UvrB in an incision complex.

The protein localises to the cytoplasm. Its function is as follows. The UvrABC repair system catalyzes the recognition and processing of DNA lesions. UvrC both incises the 5' and 3' sides of the lesion. The N-terminal half is responsible for the 3' incision and the C-terminal half is responsible for the 5' incision. The protein is UvrABC system protein C of Shewanella baltica (strain OS195).